The following is a 309-amino-acid chain: Serine/threonine-protein phosphatase PP2A catalytic subunit (309 aa).

Mn(2+)-binding residues include D57, H59, D85, and N117. H118 functions as the Proton donor in the catalytic mechanism. The Mn(2+) site is built by H167 and H241.

This sequence belongs to the PPP phosphatase family. PP-2A subfamily. The cofactor is Mn(2+).

It catalyses the reaction O-phospho-L-seryl-[protein] + H2O = L-seryl-[protein] + phosphate. The enzyme catalyses O-phospho-L-threonyl-[protein] + H2O = L-threonyl-[protein] + phosphate. The sequence is that of Serine/threonine-protein phosphatase PP2A catalytic subunit from Brassica napus (Rape).